The sequence spans 307 residues: Methionyl-tRNA formyltransferase (307 aa).

Position 108 to 111 (108 to 111 (SLLP)) interacts with (6S)-5,6,7,8-tetrahydrofolate.

This sequence belongs to the Fmt family.

The catalysed reaction is L-methionyl-tRNA(fMet) + (6R)-10-formyltetrahydrofolate = N-formyl-L-methionyl-tRNA(fMet) + (6S)-5,6,7,8-tetrahydrofolate + H(+). Its function is as follows. Attaches a formyl group to the free amino group of methionyl-tRNA(fMet). The formyl group appears to play a dual role in the initiator identity of N-formylmethionyl-tRNA by promoting its recognition by IF2 and preventing the misappropriation of this tRNA by the elongation apparatus. This chain is Methionyl-tRNA formyltransferase, found in Xanthomonas oryzae pv. oryzae (strain MAFF 311018).